The chain runs to 184 residues: Nucleoporin-62 C-terminal-like protein (184 aa).

Positions 117–151 (RILHGEVNKVKLDQKRLEQELDFILSQQQELEFLL) form a coiled coil.

The protein belongs to the nucleoporin NSP1/NUP62 family.

The sequence is that of Nucleoporin-62 C-terminal-like protein (NUP62CL) from Homo sapiens (Human).